The following is a 469-amino-acid chain: Adenosylhomocysteinase (469 aa).

Positions 63, 139, and 164 each coordinate substrate. 165 to 167 (TTT) is a binding site for NAD(+). Substrate-binding residues include Lys-194 and Asp-198. NAD(+) contacts are provided by residues Asn-199, 228-233 (GYGDVG), Glu-251, Asn-300, 321-323 (IGH), and Asn-375.

Belongs to the adenosylhomocysteinase family. NAD(+) serves as cofactor.

The protein localises to the cytoplasm. The catalysed reaction is S-adenosyl-L-homocysteine + H2O = L-homocysteine + adenosine. It functions in the pathway amino-acid biosynthesis; L-homocysteine biosynthesis; L-homocysteine from S-adenosyl-L-homocysteine: step 1/1. Functionally, may play a key role in the regulation of the intracellular concentration of adenosylhomocysteine. This chain is Adenosylhomocysteinase, found in Pseudomonas syringae pv. tomato (strain ATCC BAA-871 / DC3000).